The primary structure comprises 281 residues: Phosphatidylglycerol--prolipoprotein diacylglyceryl transferase (281 aa).

7 consecutive transmembrane segments (helical) span residues 11–31, 57–77, 89–109, 121–141, 194–214, 222–242, and 255–275; these read IIFT…VISF, LLYA…IIFY, VFYI…AIIV, ILEI…AGRI, PTQL…IYFF, GSIS…IEFF, and IITM…IIMY. An a 1,2-diacyl-sn-glycero-3-phospho-(1'-sn-glycerol)-binding site is contributed by Arg140.

Belongs to the Lgt family.

It is found in the cell inner membrane. The enzyme catalyses L-cysteinyl-[prolipoprotein] + a 1,2-diacyl-sn-glycero-3-phospho-(1'-sn-glycerol) = an S-1,2-diacyl-sn-glyceryl-L-cysteinyl-[prolipoprotein] + sn-glycerol 1-phosphate + H(+). It functions in the pathway protein modification; lipoprotein biosynthesis (diacylglyceryl transfer). In terms of biological role, catalyzes the transfer of the diacylglyceryl group from phosphatidylglycerol to the sulfhydryl group of the N-terminal cysteine of a prolipoprotein, the first step in the formation of mature lipoproteins. The chain is Phosphatidylglycerol--prolipoprotein diacylglyceryl transferase from Buchnera aphidicola subsp. Acyrthosiphon pisum (strain Tuc7).